An 868-amino-acid polypeptide reads, in one-letter code: Spindle and centriole-associated protein 1 (868 aa).

Disordered stretches follow at residues 129-154, 172-201, 229-250, and 291-326; these read RTGF…DPGT, DDGG…HSNR, IAAQ…AEDQ, and KPLL…LASS. Composition is skewed to polar residues over residues 190 to 200 and 229 to 245; these read ELPNSLSPHSN and IAAQ…SSEL. Thr-236 is modified (phosphothreonine). Residue Ser-240 is modified to Phosphoserine. The span at 315-326 shows a compositional bias: low complexity; sequence SSSTTSADLASS. Positions 381 to 434 form a coiled coil; sequence RYLKESETQLRKEVETRQQLEQMLGDHRELIDALTAEILLLREENGAVQARLQQ. Disordered regions lie at residues 630-664 and 702-722; these read PQFV…LGDG and SSGG…NASE. Low complexity predominate over residues 634–649; the sequence is SLSQPPCSSPPSTQQS. A Phosphoserine modification is found at Ser-655. Over residues 706-715 the composition is skewed to basic and acidic residues; sequence EHGDGLREPS. Positions 736 to 764 form a coiled coil; sequence SSMEERIAELNRQSMEARSKLLQLIEQQK. 4 positions are modified to phosphoserine: Ser-772, Ser-773, Ser-776, and Ser-831. Residues 805–868 form a disordered region; it reads SSKCNTVSPV…GWFALSAHLP (64 aa). Residues 812–831 show a composition bias toward low complexity; it reads SPVSGVSSRRSSGAISNSCS.

As to quaternary structure, interacts with CEP120.

It is found in the cytoplasm. It localises to the cytoskeleton. The protein resides in the microtubule organizing center. Its subcellular location is the centrosome. The protein localises to the centriole. It is found in the spindle. Its function is as follows. Regulator required for centriole duplication, for proper bipolar spindle formation and chromosome congression in mitosis. The protein is Spindle and centriole-associated protein 1 (Spice1) of Rattus norvegicus (Rat).